A 65-amino-acid chain; its full sequence is UPF0434 protein HSM_0997 (65 aa).

It belongs to the UPF0434 family.

This chain is UPF0434 protein HSM_0997, found in Histophilus somni (strain 2336) (Haemophilus somnus).